A 919-amino-acid chain; its full sequence is Transcriptional regulatory protein EDS1 (919 aa).

Residues 1–54 are disordered; the sequence is MSHHVPNLYGTPIRDPHERKRNSASMGEVNQSVSSRNCERGSEKGTKQRKKASR. A compositionally biased stretch (polar residues) spans 23–36; it reads SASMGEVNQSVSSR. Residues 37–46 are compositionally biased toward basic and acidic residues; it reads NCERGSEKGT. The zn(2)-C6 fungal-type DNA-binding region spans 56-85; it reads CDQCRRKRIKCRFDKHTGVCQGCLEVGEKC. The disordered stretch occupies residues 297 to 338; that stretch reads AGCPNKKLGTDGRSDKWDKNSTWKPVYRSSNPSHPSTEKNVS. Over residues 304–317 the composition is skewed to basic and acidic residues; the sequence is LGTDGRSDKWDKNS. Positions 318 to 338 are enriched in polar residues; that stretch reads TWKPVYRSSNPSHPSTEKNVS.

As to quaternary structure, binds DNA in a sequence-specific manner.

Its subcellular location is the nucleus. This Saccharomyces cerevisiae (strain RM11-1a) (Baker's yeast) protein is Transcriptional regulatory protein EDS1 (EDS1).